A 57-amino-acid chain; its full sequence is RPSFCNLPVKPGPCNGFFSAFYYSQKTNKCHSFTYGGCKGNANRFSTIEKCRRTCVG.

The BPTI/Kunitz inhibitor domain occupies 5–55 (CNLPVKPGPCNGFFSAFYYSQKTNKCHSFTYGGCKGNANRFSTIEKCRRTC). Intrachain disulfides connect Cys-5–Cys-55, Cys-14–Cys-38, and Cys-30–Cys-51. Residues 15–16 (NG) are important for binding V2R.

This sequence belongs to the venom Kunitz-type family. As to expression, expressed by the venom gland.

The protein localises to the secreted. Its function is as follows. Selectively interacts with vasopressin V2 receptor (V2R/AVPR2) and fully inhibits three major signaling pathways of this receptor that are GalphaS protein, the interaction with beta-arrestin and activation of MAP kinase. Inhibits vasopressin binding human V2R in the nanomolar range (Ki=5.02 nM), and also potently inhibits vasopressin-induced cAMP production (IC(50)=94 nM). In vivo, this protein shows an aquaretic effect. Urine output increases and urine osmolality decreases dramatically under treatment with this protein, without differences observed between healthy mice and the pcy mice model of the autosomal-dominant polycystic kidney disease (ADPKD). This protein does not modify electrolyte, protein and urea excretions in the urine samples, but produces a 3-fold decrease of creatinine levels. Intraperitoneal injection of this protein into the pcy mice significantly reduces the number of renal cysts and the total area of cysts. This protein also shows high efficacy in preventing hyponatremia in rat models (induced by DAVP). Is highly visible in mice liver and kidney after intravenous injection. Is rapidly eliminated in the liver, whereas it exhibits slow elimination in the kidney due to the high expression of V2R which acts as a reservoir. In addition, its elimination from blood is rapid. Fluorescent MQ1 probes could also be used for imaging V2R-overexpressing cancer cells; note that these probes label the three renal cancer cell lines CAKI-2, ACHN and A498 that highly express V2R. In vivo, does not show any toxicity on animals, even at highest doses tested, such as prostration, spidy coat, appetite or weight loss. The polypeptide is Mambaquaretin-1 (Dendroaspis angusticeps (Eastern green mamba)).